Consider the following 137-residue polypeptide: Large ribosomal subunit protein uL16 (137 aa).

Belongs to the universal ribosomal protein uL16 family. In terms of assembly, part of the 50S ribosomal subunit.

In terms of biological role, binds 23S rRNA and is also seen to make contacts with the A and possibly P site tRNAs. This Wolbachia sp. subsp. Brugia malayi (strain TRS) protein is Large ribosomal subunit protein uL16.